The sequence spans 908 residues: MEEGGRDKTPVQSQQPSATAPSGADEKSSGKERRDAGEKDKEQELSEEDKQLQDELEMLVERLGEKDTSLYRPALEELRRQIRSSTTSMTSVPKPLKFLRPHYGKLKEIYENMAPGENKCFAADIISVLAMTMSGERECLKYRLVGSQEELASWGHEYVRHLAGEVAKEWQELDDAEKAQREPLLTLVKEIVPYNMAHNAEHEACDLLMEIEQVDMLEKDIDENAYSKVCLYLTSCVNYVPEPENSALLRCALGVFRKFSRFPEALRLALMLNDMELVEDIFTSCKDVVVQKQMAFMLGRHGVFLELSEDVEEYEDLTEIMSNVQLNSNFLALARELDIMEPKVPDDIYKTHLENNRFGGSGSQVDSARMNLASSFVNGFVNAAFGQDKLLTDDGNKWLYKNKDHGMLSAAASLGMILLWDVDGGLTQIDKYLYSSEDYIKSGALLACGIVNSGVRNECDPALALLSDYVLHNSNTMRLGSIFGLGLAYAGSNREDVLTLLLPVMGDSKSSMEVAGVTALACGMIAVGSCNGDVTSTILQTIMEKSETELKDTYARWLPLGLGLNHLGKGEAIEAILAALEVVSEPFRSFANTLVDVCAYAGSGNVLKVQQLLHICSEHFDSKEKEEDKDKKEKKDKDKKEAPADMGAHQGVAVLGIALIAMGEEIGAEMALRTFGHLLRYGEPTLRRAVPLALALISVSNPRLNILDTLSKFSHDADPEVSYNSIFAMGMVGSGTNNARLAAMLRQLAQYHAKDPNNLFMVRLAQGLTHLGKGTLTLCPYHSDRQLMSQVAVAGLLTVLVSFLDVRNIILGKSHYVLYGLVAAMQPRMLVTFDEELRPLPVSVRVGQAVDVVGQAGKPKTITGFQTHTTPVLLAHGERAELATEEFLPVTPILEGFVILRKNPNYNL.

An N-acetylmethionine modification is found at M1. The segment at 1-51 (MEEGGRDKTPVQSQQPSATAPSGADEKSSGKERRDAGEKDKEQELSEEDKQ) is disordered. T9 bears the Phosphothreonine mark. A compositionally biased stretch (polar residues) spans 10–20 (PVQSQQPSATA). Residues 24–51 (ADEKSSGKERRDAGEKDKEQELSEEDKQ) are compositionally biased toward basic and acidic residues. Residues S29 and S147 each carry the phosphoserine modification. Position 194 is a phosphotyrosine (Y194). S361 and S363 each carry phosphoserine. PC repeat units follow at residues 409 to 442 (SAAA…YIKS), 443 to 479 (GALL…TMRL), 480 to 514 (GSIF…SMEV), 517 to 551 (VTAL…TELK), and 560 to 589 (LGLG…PFRS). An N6-acetyllysine modification is found at K551. Basic and acidic residues predominate over residues 623-643 (KEKEEDKDKKEKKDKDKKEAP). Residues 623–645 (KEKEEDKDKKEKKDKDKKEAPAD) form a disordered region. PC repeat units lie at residues 692–723 (LALA…EVSY) and 742–757 (AAML…KDPN). Residues 708 to 903 (DTLSKFSHDA…LEGFVILRKN (196 aa)) form a required for interaction with UBLCP1 region.

It belongs to the proteasome subunit S2 family. As to quaternary structure, component of the 19S proteasome regulatory particle complex. The 26S proteasome consists of a 20S core particle (CP) and two 19S regulatory subunits (RP). The regulatory particle is made of a lid composed of 9 subunits, a base containing 6 ATPases and few additional components including PSMD2. Interacts with RPGRIP1L. Interacts with CRY1 in a KDM8-dependent manner. Interacts (via C-terminus) with phosphatase UBLCP1 (via ubiquitin-like domain); the interaction recruits UBLCP1 to the 19S regulatory particle where it dephosphorylates 19S subunit PSMC2/RPT1 which impairs PSMC2 ATPase activity and disrupts 26S proteasome assembly.

Its function is as follows. Component of the 26S proteasome, a multiprotein complex involved in the ATP-dependent degradation of ubiquitinated proteins. This complex plays a key role in the maintenance of protein homeostasis by removing misfolded or damaged proteins, which could impair cellular functions, and by removing proteins whose functions are no longer required. Therefore, the proteasome participates in numerous cellular processes, including cell cycle progression, apoptosis, or DNA damage repair. Functionally, binds to the intracellular domain of tumor necrosis factor type 1 receptor. The binding domain of TRAP1 and TRAP2 resides outside the death domain of TNFR1. In Rattus norvegicus (Rat), this protein is 26S proteasome non-ATPase regulatory subunit 2 (Psmd2).